The following is a 178-amino-acid chain: UPF0114 protein HPSH_00970 (178 aa).

The next 4 helical transmembrane spans lie at 15-35, 54-74, 102-122, and 145-165; these read WLLA…GYVF, LVLS…VLMV, FNAL…IFLL, and PIFW…LAAV.

The protein belongs to the UPF0114 family.

The protein localises to the cell membrane. The protein is UPF0114 protein HPSH_00970 of Helicobacter pylori (strain Shi470).